Reading from the N-terminus, the 293-residue chain is MAGDNMLKLGIPKGSLQDATIALFEKSGWKIRMHHRNYFPEINDPEITCSMCRAQEMSRYVESGTLDCGLTGKDWILENESDVVVVADLVYSKVSNRPARWVLAVAADSPYKRPEDLAGKKIATELCNFTKQYFSGAGIPVEVEFSWGATEAKVVEGLADAIVEVTETGTTIKAHGLRIISDLLSTNTQLIANKKAWEDPFKRRKIEILNMMLQGALRAEGLVGLKMNVPEEKMPAIMALLPSLTAPTVANLYNKDWLSVEIVVTEGIVRDLIPKLHDLGAEGIIEYALNKVI.

This sequence belongs to the ATP phosphoribosyltransferase family. Long subfamily. The cofactor is Mg(2+).

The protein resides in the cytoplasm. It catalyses the reaction 1-(5-phospho-beta-D-ribosyl)-ATP + diphosphate = 5-phospho-alpha-D-ribose 1-diphosphate + ATP. It functions in the pathway amino-acid biosynthesis; L-histidine biosynthesis; L-histidine from 5-phospho-alpha-D-ribose 1-diphosphate: step 1/9. Its activity is regulated as follows. Feedback inhibited by histidine. In terms of biological role, catalyzes the condensation of ATP and 5-phosphoribose 1-diphosphate to form N'-(5'-phosphoribosyl)-ATP (PR-ATP). Has a crucial role in the pathway because the rate of histidine biosynthesis seems to be controlled primarily by regulation of HisG enzymatic activity. The polypeptide is ATP phosphoribosyltransferase (Solidesulfovibrio magneticus (strain ATCC 700980 / DSM 13731 / RS-1) (Desulfovibrio magneticus)).